A 290-amino-acid chain; its full sequence is Arylamine N-acetyltransferase 1 (290 aa).

Met-1 carries the N-acetylmethionine modification. Ser-103 is a CoA binding site. A substrate-binding site is contributed by 106-107 (IH). Tyr-208 is a binding site for CoA.

Belongs to the arylamine N-acetyltransferase family.

Its subcellular location is the cytoplasm. It catalyses the reaction an arylamine + acetyl-CoA = an N-acetylarylamine + CoA. Functionally, participates in the detoxification of a plethora of hydrazine and arylamine drugs. In Bos taurus (Bovine), this protein is Arylamine N-acetyltransferase 1 (NAT1).